The primary structure comprises 556 residues: Genetic interactor of prohibitins 3, mitochondrial (556 aa).

A mitochondrion-targeting transit peptide spans 1–21 (MLNLCHALRGVRQFSCSVIVK). The CP-type G domain occupies 113-305 (ESTLNDILNY…LFDLPGYSTS (193 aa)).

It belongs to the TRAFAC class YlqF/YawG GTPase family. GEP3 subfamily.

Its subcellular location is the mitochondrion. In terms of biological role, interacts genetically with prohibitins and thus may be involved in the mitochondrial lipid metabolism. This is Genetic interactor of prohibitins 3, mitochondrial (GEP3) from Saccharomyces cerevisiae (strain Lalvin EC1118 / Prise de mousse) (Baker's yeast).